The primary structure comprises 257 residues: MLAKRIIPCLDVRDGQVVKGVQFRNHEIIGDIVPLAKRYAEEGADELVFYDITASSDGRVVDKSWVARVAEVIDIPFCVAGGIKSAEDAARILEFGADKVSINSPALANPQLITDLADKFGVQCIVVGIDSYYDKETGKYQVYQFTGDEERTKATQWETRDWVQEVQKRGAGEIVLNMMNQDGVRNGYDIEQLNMVREVCNVPLIASGGAGAMEHFAEAYQKANVDGALAASVFHKQVINIGELKQYLKQQGIEVRL.

Catalysis depends on residues aspartate 11 and aspartate 130.

This sequence belongs to the HisA/HisF family. Heterodimer of HisH and HisF.

The protein resides in the cytoplasm. It catalyses the reaction 5-[(5-phospho-1-deoxy-D-ribulos-1-ylimino)methylamino]-1-(5-phospho-beta-D-ribosyl)imidazole-4-carboxamide + L-glutamine = D-erythro-1-(imidazol-4-yl)glycerol 3-phosphate + 5-amino-1-(5-phospho-beta-D-ribosyl)imidazole-4-carboxamide + L-glutamate + H(+). It functions in the pathway amino-acid biosynthesis; L-histidine biosynthesis; L-histidine from 5-phospho-alpha-D-ribose 1-diphosphate: step 5/9. In terms of biological role, IGPS catalyzes the conversion of PRFAR and glutamine to IGP, AICAR and glutamate. The HisF subunit catalyzes the cyclization activity that produces IGP and AICAR from PRFAR using the ammonia provided by the HisH subunit. The protein is Imidazole glycerol phosphate synthase subunit hisF1 (hisF1) of Vibrio vulnificus (strain YJ016).